Consider the following 471-residue polypeptide: Ribulose bisphosphate carboxylase large chain (471 aa).

Lys5 bears the N6,N6,N6-trimethyllysine mark. Substrate is bound by residues Asn114 and Thr164. Lys166 serves as the catalytic Proton acceptor. Lys168 serves as a coordination point for substrate. Lys192, Asp194, and Glu195 together coordinate Mg(2+). At Lys192 the chain carries N6-carboxylysine. The active-site Proton acceptor is His285. Positions 286, 318, and 370 each coordinate substrate.

It belongs to the RuBisCO large chain family. Type I subfamily. In terms of assembly, heterohexadecamer of 8 large chains and 8 small chains; disulfide-linked. The disulfide link is formed within the large subunit homodimers. Mg(2+) is required as a cofactor. Post-translationally, the disulfide bond which can form in the large chain dimeric partners within the hexadecamer appears to be associated with oxidative stress and protein turnover.

It is found in the plastid. Its subcellular location is the chloroplast. The enzyme catalyses 2 (2R)-3-phosphoglycerate + 2 H(+) = D-ribulose 1,5-bisphosphate + CO2 + H2O. It catalyses the reaction D-ribulose 1,5-bisphosphate + O2 = 2-phosphoglycolate + (2R)-3-phosphoglycerate + 2 H(+). RuBisCO catalyzes two reactions: the carboxylation of D-ribulose 1,5-bisphosphate, the primary event in carbon dioxide fixation, as well as the oxidative fragmentation of the pentose substrate in the photorespiration process. Both reactions occur simultaneously and in competition at the same active site. The protein is Ribulose bisphosphate carboxylase large chain of Schlumbergera truncata (Thanksgiving cactus).